The chain runs to 374 residues: Ribosomal RNA large subunit methyltransferase G (374 aa).

The protein belongs to the methyltransferase superfamily. RlmG family.

It localises to the cytoplasm. The catalysed reaction is guanosine(1835) in 23S rRNA + S-adenosyl-L-methionine = N(2)-methylguanosine(1835) in 23S rRNA + S-adenosyl-L-homocysteine + H(+). Its function is as follows. Specifically methylates the guanine in position 1835 (m2G1835) of 23S rRNA. This chain is Ribosomal RNA large subunit methyltransferase G, found in Pseudomonas putida (strain GB-1).